A 223-amino-acid chain; its full sequence is Phosphoribosylformylglycinamidine synthase subunit PurQ (223 aa).

One can recognise a Glutamine amidotransferase type-1 domain in the interval 4–223; sequence FAVVVFPGTN…FRSMVEWARK (220 aa). Cys85 serves as the catalytic Nucleophile. Catalysis depends on residues His196 and Glu198.

Part of the FGAM synthase complex composed of 1 PurL, 1 PurQ and 2 PurS subunits.

The protein localises to the cytoplasm. The catalysed reaction is N(2)-formyl-N(1)-(5-phospho-beta-D-ribosyl)glycinamide + L-glutamine + ATP + H2O = 2-formamido-N(1)-(5-O-phospho-beta-D-ribosyl)acetamidine + L-glutamate + ADP + phosphate + H(+). It carries out the reaction L-glutamine + H2O = L-glutamate + NH4(+). Its pathway is purine metabolism; IMP biosynthesis via de novo pathway; 5-amino-1-(5-phospho-D-ribosyl)imidazole from N(2)-formyl-N(1)-(5-phospho-D-ribosyl)glycinamide: step 1/2. Part of the phosphoribosylformylglycinamidine synthase complex involved in the purines biosynthetic pathway. Catalyzes the ATP-dependent conversion of formylglycinamide ribonucleotide (FGAR) and glutamine to yield formylglycinamidine ribonucleotide (FGAM) and glutamate. The FGAM synthase complex is composed of three subunits. PurQ produces an ammonia molecule by converting glutamine to glutamate. PurL transfers the ammonia molecule to FGAR to form FGAM in an ATP-dependent manner. PurS interacts with PurQ and PurL and is thought to assist in the transfer of the ammonia molecule from PurQ to PurL. This is Phosphoribosylformylglycinamidine synthase subunit PurQ from Thermococcus kodakarensis (strain ATCC BAA-918 / JCM 12380 / KOD1) (Pyrococcus kodakaraensis (strain KOD1)).